An 843-amino-acid chain; its full sequence is F-box only protein 11 (843 aa).

Residues 1 to 63 (MVAEESGPGA…RVSGKSQDLS (63 aa)) form a disordered region. Residues 30-45 (PTKNSMEGASTSTTEN) are compositionally biased toward polar residues. Residues 69–115 (QYLQEKLPDEVVLKIFSYLLEQDLCRAACVCKRFSELANDPILWKRL) form the F-box domain. PbH1 repeat units lie at residues 311-333 (GACPTIKHCNISDCENVGLYITD), 334-356 (HAQGIYEDNEISNNALAGIWVKN), 357-379 (HGNPIIRRNHIHHGRDVGVFTFD), 380-402 (HGMGYFESCNIHRNRIAGFEVKA), 403-425 (YANPTVVRCEIHHGQTGGIYVHE), 426-448 (KGRGQFIENKIYANNFAGVWITS), 449-471 (NSDPTIRGNSIFNGNQGGVYIFG), 472-494 (DGRGLIEGNDIYGNALAGIQIRT), 495-517 (NSCPIVRHNKIHDGQHGGIYVHE), 518-540 (KGQGVIEENEVYSNTLAGVWVTT), 541-563 (GSTPVLRRNRIHSGKQVGVYFYD), 564-586 (NGHGVLEDNDIYNHMYSGVQIRT), 587-609 (GSNPKIRRNKIWGGQNGGILVYN), 610-632 (SGLGCIEDNEIFDNAMAGVWIKT), 633-655 (DSNPTLRRNKIHDGRDGGICIFN), 656-678 (GGRGLLEENDIFRNAQAGVLIST), 679-701 (NSHPVLRKNRIFDGFAAGIEITN), 702-724 (HATATLEGNQIFNNRFGGLFLAS), and 725-746 (GVNVTMKDNKIMNNQDAIEKAV). A UBR-type zinc finger spans residues 749-820 (GQCLYKISSY…LSNPCTLAGE (72 aa)).

In terms of assembly, component of the SCF(FBXO11) complex consisting of CUL1, RBX1, SKP1 and FBXO11. Interacts with CIITA.

The protein localises to the nucleus. The protein resides in the chromosome. It functions in the pathway protein modification; protein ubiquitination. Its function is as follows. Substrate recognition component of a SCF (SKP1-CUL1-F-box protein) E3 ubiquitin-protein ligase complex which mediates the ubiquitination and subsequent proteasomal degradation of target proteins, such as DTL/CDT2, BCL6, SNAI1 and PRDM1/BLIMP1. The SCF(FBXO11) complex mediates ubiquitination and degradation of BCL6, thereby playing a role in the germinal center B-cells terminal differentiation toward memory B-cells and plasma cells. The SCF(FBXO11) complex also mediates ubiquitination and degradation of DTL, an important step for the regulation of TGF-beta signaling, cell migration and the timing of the cell-cycle progression and exit. The SCF(FBXO11) complex also catalyzes ubiquitination and degradation of GSK3B-phosphorylated SNAI1. Binds to and neddylates phosphorylated p53/TP53, inhibiting its transcriptional activity. Plays a role in the regulatiom of erythropoiesis but not myelopoiesis or megakaryopoiesis. Mechanistically, activates erythroid genes by mediating the degradation of BAHD1, a heterochromatin-associated protein that recruits corepressors to H3K27me3 marks. Participates in macrophage cell death and inflammation in response to bacterial toxins by regulating the expression of complement 5a receptor 1/C5AR1 and IL-1beta. Acts as a critical regulator to determine the level of MHC-II by mediating the recognition of degron at the P/S/T domain of CIITA leading to its ubiquitination and subsequent degradation via the proteasome. Participates in the antiviral repsonse by initiating the activation of TBK1-IRF3-IFN-I axis. Mediates the 'Lys-63'-linked ubiquitination of TRAF3 to strengthen the interaction between TRAF3 and TBK1. This is F-box only protein 11 (Fbxo11) from Rattus norvegicus (Rat).